Consider the following 368-residue polypeptide: Cytochrome b-c1 complex subunit 2, mitochondrial (368 aa).

A mitochondrion-targeting transit peptide spans 1–16 (MLSAARLQFAQGSVRR). A phosphoserine mark is found at Ser141 and Ser168.

Belongs to the peptidase M16 family. UQCRC2/QCR2 subfamily. In terms of assembly, component of the ubiquinol-cytochrome c oxidoreductase (cytochrome b-c1 complex, complex III, CIII), a multisubunit enzyme composed of 10 subunits. The complex is composed of 3 respiratory subunits cytochrome b (COB), cytochrome c1 (CYT1) and Rieske protein (RIP1), 2 core protein subunits COR1 and QCR2, and 5 low-molecular weight protein subunits QCR6, QCR7, QCR8, QCR9 and QCR10. The complex exists as an obligatory dimer and forms supercomplexes (SCs) in the inner mitochondrial membrane with a monomer or a dimer of cytochrome c oxidase (complex IV, CIV), resulting in 2 different assemblies (supercomplexes III(2)IV and III(2)IV(2)).

Its subcellular location is the mitochondrion inner membrane. In terms of biological role, component of the ubiquinol-cytochrome c oxidoreductase, a multisubunit transmembrane complex that is part of the mitochondrial electron transport chain which drives oxidative phosphorylation. The respiratory chain contains 3 multisubunit complexes succinate dehydrogenase (complex II, CII), ubiquinol-cytochrome c oxidoreductase (cytochrome b-c1 complex, complex III, CIII) and cytochrome c oxidase (complex IV, CIV), that cooperate to transfer electrons derived from NADH and succinate to molecular oxygen, creating an electrochemical gradient over the inner membrane that drives transmembrane transport and the ATP synthase. The cytochrome b-c1 complex catalyzes electron transfer from ubiquinol to cytochrome c, linking this redox reaction to translocation of protons across the mitochondrial inner membrane, with protons being carried across the membrane as hydrogens on the quinol. In the process called Q cycle, 2 protons are consumed from the matrix, 4 protons are released into the intermembrane space and 2 electrons are passed to cytochrome c. This is Cytochrome b-c1 complex subunit 2, mitochondrial (QCR2) from Saccharomyces cerevisiae (strain ATCC 204508 / S288c) (Baker's yeast).